The chain runs to 852 residues: Leucine--tRNA ligase (852 aa).

The 'HIGH' region motif lies at 51–61 (PYPSGDLHMGH). Residues 615 to 619 (KMSKS) carry the 'KMSKS' region motif. Residue K618 participates in ATP binding.

It belongs to the class-I aminoacyl-tRNA synthetase family.

The protein resides in the cytoplasm. It catalyses the reaction tRNA(Leu) + L-leucine + ATP = L-leucyl-tRNA(Leu) + AMP + diphosphate. This is Leucine--tRNA ligase from Clavibacter sepedonicus (Clavibacter michiganensis subsp. sepedonicus).